Here is a 266-residue protein sequence, read N- to C-terminus: Translation initiation factor 2 subunit alpha (266 aa).

Residues 12–83 enclose the S1 motif domain; the sequence is GEILIATVKQ…RKGTVDVSLK (72 aa).

Belongs to the eIF-2-alpha family. As to quaternary structure, heterotrimer composed of an alpha, a beta and a gamma chain.

EIF-2 functions in the early steps of protein synthesis by forming a ternary complex with GTP and initiator tRNA. The chain is Translation initiation factor 2 subunit alpha from Saccharolobus islandicus (strain Y.N.15.51 / Yellowstone #2) (Sulfolobus islandicus).